The sequence spans 309 residues: Phytoene synthase (309 aa).

Belongs to the phytoene/squalene synthase family. ATP is required as a cofactor. It depends on Mn(2+) as a cofactor. Requires Mg(2+) as cofactor.

Its pathway is carotenoid biosynthesis; phytoene biosynthesis. Functionally, involved in the biosynthesis of carotenoids. Catalyzes the condensation of two molecules of geranylgeranyl diphosphate (GGPP) to give prephytoene diphosphate (PPPP) and the subsequent rearrangement of the cyclopropylcarbinyl intermediate to yield phytoene. This is Phytoene synthase (crtB) from Pseudescherichia vulneris (Escherichia vulneris).